We begin with the raw amino-acid sequence, 89 residues long: Putative protein T-ENOL (89 aa).

Disordered stretches follow at residues 1–31 (MAST…KASL) and 54–89 (RSHM…TDTR).

In terms of tissue distribution, specifically expressed in testis (at protein level).

The sequence is that of Putative protein T-ENOL from Rattus norvegicus (Rat).